We begin with the raw amino-acid sequence, 634 residues long: Proline and serine-rich protein 3 (634 aa).

Disordered regions lie at residues 1–69 (MFPK…LIDN), 81–142 (FRQA…TSLA), 185–242 (DASS…ATLK), 368–455 (VPPT…FEGP), and 472–534 (FPDS…TAPK). Residues 15-24 (RTGATRSQRP) are compositionally biased toward polar residues. Low complexity-rich tracts occupy residues 40–56 (ESWP…STTE), 128–140 (VTGP…SSTS), and 185–202 (DASS…SPSS). Residues 203–215 (VTFNPDSNKSSNP) show a composition bias toward polar residues. The segment covering 368 to 377 (VPPTSTSTTP) has biased composition (low complexity). The span at 378-399 (APTPTPQVCIPGPPTSAPPPCA) shows a compositional bias: pro residues. Over residues 436 to 448 (VSTSSHQKTTVPD) the composition is skewed to polar residues. A compositionally biased stretch (basic and acidic residues) spans 503–515 (PESRRGSKTESRK). Ser588 carries the post-translational modification Phosphoserine.

Its subcellular location is the cytoplasm. The protein resides in the cytoskeleton. It localises to the microtubule organizing center. The protein localises to the centrosome. The protein is Proline and serine-rich protein 3 (Proser3) of Mus musculus (Mouse).